We begin with the raw amino-acid sequence, 842 residues long: Protein translocase subunit SecA (842 aa).

ATP is bound by residues glutamine 85, 103–107 (GEGKT), and aspartate 493. Positions 825, 827, 836, and 837 each coordinate Zn(2+).

This sequence belongs to the SecA family. As to quaternary structure, monomer and homodimer. Part of the essential Sec protein translocation apparatus which comprises SecA, SecYEG and auxiliary proteins SecDF. Other proteins may also be involved. Zn(2+) serves as cofactor.

Its subcellular location is the cell membrane. It is found in the cytoplasm. The enzyme catalyses ATP + H2O + cellular proteinSide 1 = ADP + phosphate + cellular proteinSide 2.. Part of the Sec protein translocase complex. Interacts with the SecYEG preprotein conducting channel. Has a central role in coupling the hydrolysis of ATP to the transfer of proteins into and across the cell membrane, serving as an ATP-driven molecular motor driving the stepwise translocation of polypeptide chains across the membrane. This is Protein translocase subunit SecA from Streptococcus equi subsp. zooepidemicus (strain MGCS10565).